Here is a 438-residue protein sequence, read N- to C-terminus: Trigger factor (438 aa).

The PPIase FKBP-type domain occupies 160–245 (DDKVTIDFVG…VKKIQQAELP (86 aa)).

This sequence belongs to the FKBP-type PPIase family. Tig subfamily.

Its subcellular location is the cytoplasm. It catalyses the reaction [protein]-peptidylproline (omega=180) = [protein]-peptidylproline (omega=0). Its function is as follows. Involved in protein export. Acts as a chaperone by maintaining the newly synthesized protein in an open conformation. Functions as a peptidyl-prolyl cis-trans isomerase. The chain is Trigger factor from Francisella tularensis subsp. mediasiatica (strain FSC147).